An 807-amino-acid chain; its full sequence is G-type lectin S-receptor-like serine/threonine-protein kinase At1g61420 (807 aa).

Residues 1–24 (MGKKWIVFFAYLLLSSFFISSSSA) form the signal peptide. Positions 25–144 (GITKESPLPI…FSGRTLWQSF (120 aa)) constitute a Bulb-type lectin domain. The Extracellular portion of the chain corresponds to 25 to 426 (GITKESPLPI…ELGGNKRKKA (402 aa)). N-linked (GlcNAc...) asparagine glycosylation is found at Asn53, Asn94, Asn117, Asn134, Asn236, and Asn267. The EGF-like; atypical domain maps to 278 to 314 (PEHSCDYYGVCGPFGLCVKSVPPKCTCFKGFVPKLIE). 2 disulfide bridges follow: Cys282–Cys294 and Cys288–Cys302. N-linked (GlcNAc...) asparagine glycans are attached at residues Asn320, Asn336, and Asn375. Positions 333–413 (CQGNSTGKYA…EGGELLSIRL (81 aa)) constitute a PAN domain. 2 cysteine pairs are disulfide-bonded: Cys368–Cys389 and Cys372–Cys378. A helical membrane pass occupies residues 427–447 (ITASIVSLSLVVIIAFVAFCF). Residues 448-807 (WRYRVKHNAD…EMTKSVILGR (360 aa)) lie on the Cytoplasmic side of the membrane. Residues 494–779 (FSISNKLGQG…DLPPPEQPTF (286 aa)) form the Protein kinase domain. Residues 500–508 (LGQGGFGPV) and Lys522 contribute to the ATP site. A phosphoserine mark is found at Ser528 and Ser543. Residues 583 to 600 (RKRLEIDWPKRLDIIQGI) form a caM-binding region. Asp619 acts as the Proton acceptor in catalysis. Residues Ser623 and Ser636 each carry the phosphoserine modification. Phosphothreonine is present on Thr653. Residues Ser696 and Ser790 each carry the phosphoserine modification.

Belongs to the protein kinase superfamily. Ser/Thr protein kinase family.

It is found in the cell membrane. The catalysed reaction is L-seryl-[protein] + ATP = O-phospho-L-seryl-[protein] + ADP + H(+). It carries out the reaction L-threonyl-[protein] + ATP = O-phospho-L-threonyl-[protein] + ADP + H(+). In Arabidopsis thaliana (Mouse-ear cress), this protein is G-type lectin S-receptor-like serine/threonine-protein kinase At1g61420.